The following is a 354-amino-acid chain: MSKAIIKLDHIDITFHQKKRTIEAVKGVTVHINQGDIYGIVGYSGAGKSTLVRVINLLQTPTKGKITVDQDVIFENGEKRLSSQELRKKRHEIGMIFQHFNLMAQKTARQNVAFALRHSNLSAAQKESKVTELLELVGLTDRAENYPSQLSGGQKQRVAIARALANDPKILISDEATSALDPKTTKQILALLQDLNKKLGLTVVMITHEMQIVKDICNRVAVMQEGSLIEEGSVLDIFSNPREDLTKDFIKTATGIEEALIKIKQQEIVKNLPANAALVQLKYAGKTTDEPILNNLYKKYQVTANILYGNIEILEKTPVGEMIVILEGAATNIDQALNDLTHSDLTVTVLKRGV.

The 243-residue stretch at 8–250 folds into the ABC transporter domain; the sequence is LDHIDITFHQ…PREDLTKDFI (243 aa). 42–49 is an ATP binding site; that stretch reads GYSGAGKS.

Belongs to the ABC transporter superfamily. Methionine importer (TC 3.A.1.24) family. The complex is composed of two ATP-binding proteins (MetN), two transmembrane proteins (MetI) and a solute-binding protein (MetQ).

It is found in the cell membrane. The catalysed reaction is L-methionine(out) + ATP + H2O = L-methionine(in) + ADP + phosphate + H(+). The enzyme catalyses D-methionine(out) + ATP + H2O = D-methionine(in) + ADP + phosphate + H(+). Functionally, part of the ABC transporter complex MetNIQ involved in methionine import. Responsible for energy coupling to the transport system. The polypeptide is Methionine import ATP-binding protein MetN (Streptococcus mutans serotype c (strain ATCC 700610 / UA159)).